We begin with the raw amino-acid sequence, 280 residues long: Dual adapter for phosphotyrosine and 3-phosphotyrosine and 3-phosphoinositide (280 aa).

Residues 35-129 enclose the SH2 domain; the sequence is WYHGNLTRHA…GTLMVLKHPY (95 aa). Residue Y139 is modified to Phosphotyrosine. At S141 the chain carries Phosphoserine. The 96-residue stretch at 164–259 folds into the PH domain; that stretch reads LGTKEGYLTK…WIKILRWKLS (96 aa).

Interacts with PtdIns(3,4,5)P3 and PLCG2. In terms of processing, phosphorylated on tyrosine residues.

It localises to the cytoplasm. The protein resides in the membrane. Its function is as follows. May act as a B-cell-associated adapter that regulates B-cell antigen receptor (BCR)-signaling downstream of PI3K. The polypeptide is Dual adapter for phosphotyrosine and 3-phosphotyrosine and 3-phosphoinositide (Dapp1) (Mus musculus (Mouse)).